The sequence spans 210 residues: Nta operon transcriptional regulator (210 aa).

The HTH gntR-type domain occupies M1 to L55. A DNA-binding region (H-T-H motif) is located at residues E15–N34.

Functionally, probable regulator for the expression of the NTA monooxygenase subunits. The polypeptide is Nta operon transcriptional regulator (ntaR) (Aminobacter aminovorans (Chelatobacter heintzii)).